The following is a 354-amino-acid chain: Sulfate permease CysP (354 aa).

8 helical membrane-spanning segments follow: residues 3–23, 40–60, 77–97, 125–145, 164–184, 197–217, 293–313, and 320–340; these read LAAILFSLFFAMNIGASGAAA, ALILCAVGVFAGAVIGGGEVV, IVCIIIGAAALSLFTANLLGI, LIIVSFWVFVPLFAFGFTYFV, ILGIVLLVAGFFEAFSAGMNN, VLDVGKGTLYGGAFVALGALL, VWIVSPFLSLSISYLLVSLFL, and IFIMVSVLLAAGGAISLTKAI.

This sequence belongs to the inorganic phosphate transporter (PiT) (TC 2.A.20) family.

The protein resides in the cell membrane. Functionally, involved in the import of sulfate. The sequence is that of Sulfate permease CysP (cysP) from Bacillus subtilis (strain 168).